Consider the following 1138-residue polypeptide: Pesticidal crystal protein Cry7Aa (1138 aa).

This sequence belongs to the delta endotoxin family.

In terms of biological role, promotes colloidosmotic lysis by binding to the midgut epithelial cells of Coleoptera. This protein is not toxic in its natural form. It is highly toxic to Colorado potato beetle larvae after an in vitro solubilization and trypsin activation step. In Bacillus thuringiensis, this protein is Pesticidal crystal protein Cry7Aa (cry7Aa).